The following is a 219-amino-acid chain: Glutathione S-transferase F13 (219 aa).

Positions 2-82 (AMKLYGDEMS…YIAEKHRDKG (81 aa)) constitute a GST N-terminal domain. Glutathione is bound by residues 11-12 (SA), 40-41 (HK), 53-54 (KV), and 66-67 (ES). The 128-residue stretch at 90-217 (DPKEAAIVKL…VSPGLTVAPT (128 aa)) folds into the GST C-terminal domain.

This sequence belongs to the GST superfamily. Phi family.

The protein resides in the cytoplasm. Its subcellular location is the cytosol. The catalysed reaction is RX + glutathione = an S-substituted glutathione + a halide anion + H(+). Its function is as follows. May be involved in the conjugation of reduced glutathione to a wide number of exogenous and endogenous hydrophobic electrophiles and have a detoxification role against certain herbicides. This is Glutathione S-transferase F13 (GSTF13) from Arabidopsis thaliana (Mouse-ear cress).